A 310-amino-acid chain; its full sequence is MDITETDLDALKCRSSATKSGYIHDPFIKFFSPSRNSHKPPIINRGTYVRTWSIDHILQKFIESFDGKKQIISLGAGTDTRVFRYISEYGPENLKFIEFDFYPNCIRKIRTIEKHEALKQNIGDYVVDISGGSLVSGSLDIYSYDIREIVHKGFPGFVDFSLPTIVLSECCLCYLEPEEASSLCRWFQNMFATSGIVVYEPIQGMDNFGKMMKANLSARGVILKTLDCYETTEQQRMRFLDYGYSEVIAEDFLTIEETWIPIEEKKRTMSIEMLDELEEWQLLAKHYCLTFAATENLWNQIILQLPHLKT.

S-adenosyl-L-methionine is bound by residues R50, G75, D100, 145–146, and E169; that span reads DI.

It belongs to the methyltransferase superfamily. LCMT family.

The enzyme catalyses [phosphatase 2A protein]-C-terminal L-leucine + S-adenosyl-L-methionine = [phosphatase 2A protein]-C-terminal L-leucine methyl ester + S-adenosyl-L-homocysteine. In terms of biological role, methylates the carboxyl group of the C-terminal leucine residue of protein phosphatase 2A catalytic subunits to form alpha-leucine ester residues. This chain is Leucine carboxyl methyltransferase 1 (ppm1), found in Schizosaccharomyces pombe (strain 972 / ATCC 24843) (Fission yeast).